The primary structure comprises 339 residues: MKDVLTKLANANHLRFEEMQQAARELFAEDVTDSEIAAFLIALKAKGETAEELAGLASIMREVAVDIPVSGTDFIDNCGTGGDGSQSFNISTTAAFVLAGAGAKVAKHGNRSVSSKTGSADVLESLGVPLDVSTEEIATLLETNGIAFLFAQRMHPRVKQIMKVRRDLRIPTIFNLIGPLTNPVPLKTQLLGIYREDLLETIALTLHRLGRKRAIVLHGACGMDEASLAGTNQLVLLDQGELIRFSLHPEEVGLSVAPIEAIRGGTAAENAEILLRVLRGEAGPYRDTVLLNAGIALFAEGRVETIREGIERSAESIDSGRALEKLQYLQRMKQQEAIG.

5-phospho-alpha-D-ribose 1-diphosphate-binding positions include G79, 82–83 (GD), S87, 89–92 (NIST), 107–115 (KHGNRSVSS), and S119. G79 contributes to the anthranilate binding site. S91 provides a ligand contact to Mg(2+). Position 110 (N110) interacts with anthranilate. Residue R165 participates in anthranilate binding. 2 residues coordinate Mg(2+): D224 and E225.

It belongs to the anthranilate phosphoribosyltransferase family. Homodimer. Requires Mg(2+) as cofactor.

It carries out the reaction N-(5-phospho-beta-D-ribosyl)anthranilate + diphosphate = 5-phospho-alpha-D-ribose 1-diphosphate + anthranilate. Its pathway is amino-acid biosynthesis; L-tryptophan biosynthesis; L-tryptophan from chorismate: step 2/5. Functionally, catalyzes the transfer of the phosphoribosyl group of 5-phosphorylribose-1-pyrophosphate (PRPP) to anthranilate to yield N-(5'-phosphoribosyl)-anthranilate (PRA). This is Anthranilate phosphoribosyltransferase from Exiguobacterium sibiricum (strain DSM 17290 / CCUG 55495 / CIP 109462 / JCM 13490 / 255-15).